The chain runs to 1153 residues: Protein unc-13 homolog 4B (1153 aa).

Residues 54–84 form a disordered region; the sequence is VLKSSLAPLEENGSGGEEDSDESPDGTLQLS. The C2 1 domain occupies 162-288; the sequence is ATHEEIYEAA…MKEIAVTASS (127 aa). Asp-195, Asp-201, Asp-252, Phe-253, and Asp-254 together coordinate Ca(2+). One can recognise an MHD1 domain in the interval 637-755; it reads FEVYLILKRY…RCCIFYAQQM (119 aa). The 107-residue stretch at 869–975 folds into the MHD2 domain; it reads SNSMDQLMMY…LETSDLIHQY (107 aa). The region spanning 990 to 1114 is the C2 2 domain; it reads PYGQLTITAQ…EATPPGEQIM (125 aa). The Ca(2+) site is built by Asp-1019, Asp-1025, Asp-1083, and Asp-1085.

It belongs to the unc-13 family. As to quaternary structure, interacts with Cam. It depends on Ca(2+) as a cofactor.

The protein localises to the cytoplasm. Its subcellular location is the cytoskeleton. It localises to the cell projection. It is found in the filopodium. The protein resides in the late endosome. The protein localises to the lysosome. Its function is as follows. Essential for tracheal development in embryos. Functions with the GTPase Rab39 and downstream of dnd, to regulate lumen fusion between previously separate tracheal branches (anastomosis). Essential component of secretory lysosome-related organelles (SLs) that are present in the tracheal fusion tip cells (FCs). Mediates intracellular fusion of the extending tracheal stalk cell lumen in the FCs by recruiting the SNARE complex component Syx1A to the SLs, this may then enable the SLs to interact with complementary SNAREs (such as Syb) present in the apical membrane of the FC-FC interface and the membranes of the separate tracheal stalk cells. May also function in the maturation and exocytosis of the SLs. The protein is Protein unc-13 homolog 4B of Drosophila melanogaster (Fruit fly).